The following is a 376-amino-acid chain: Putative E3 ubiquitin-protein ligase XBAT34 (376 aa).

ANK repeat units follow at residues 41 to 71 and 77 to 106; these read LGRT…NVNA and NGGT…NPLV. Residues 325–364 form an RING-type zinc finger; the sequence is CVICVDAPSEAVCVPCGHVAGCISCLKEIENKKMGCPVCR.

The enzyme catalyses S-ubiquitinyl-[E2 ubiquitin-conjugating enzyme]-L-cysteine + [acceptor protein]-L-lysine = [E2 ubiquitin-conjugating enzyme]-L-cysteine + N(6)-ubiquitinyl-[acceptor protein]-L-lysine.. It participates in protein modification; protein ubiquitination. Functionally, no E3 ubiquitin-protein ligase activity observed when associated with the E2 enzyme UBC8 in vitro. The protein is Putative E3 ubiquitin-protein ligase XBAT34 (XBAT34) of Arabidopsis thaliana (Mouse-ear cress).